The following is a 147-amino-acid chain: 3-dehydroquinate dehydratase (147 aa).

The Proton acceptor role is filled by Tyr-25. 3 residues coordinate substrate: Asn-76, His-82, and Asp-89. His-102 functions as the Proton donor in the catalytic mechanism. Residues 103-104 (IS) and Arg-113 each bind substrate.

This sequence belongs to the type-II 3-dehydroquinase family. As to quaternary structure, homododecamer.

The catalysed reaction is 3-dehydroquinate = 3-dehydroshikimate + H2O. The protein operates within metabolic intermediate biosynthesis; chorismate biosynthesis; chorismate from D-erythrose 4-phosphate and phosphoenolpyruvate: step 3/7. Catalyzes a trans-dehydration via an enolate intermediate. In Mycobacterium tuberculosis (strain ATCC 25177 / H37Ra), this protein is 3-dehydroquinate dehydratase.